A 494-amino-acid polypeptide reads, in one-letter code: NAD(P)H-quinone oxidoreductase subunit 2 B, chloroplastic (494 aa).

A run of 14 helical transmembrane segments spans residues 13–33, 39–59, 81–101, 107–127, 131–151, 166–186, 211–231, 243–263, 277–297, 305–325, 336–356, 378–398, 411–433, and 468–488; these read SILPECILILSLIVTIIIDLI, TPWLYLVSLTALVTSVVILLF, IFRLFILICSLLCIPLSIDYI, ALTEFLLFILTATLGGMFLCC, LVTIFVALECLGLSSYLLSGY, LLMGGASSSILVYGFSLLYGL, MFISMIFLLVGVGFKLSLVPF, PTPVVAFFSVTSKVAALALAT, WHLLLEILAISSMILGNFIAV, MLAYSSISQIGYIIIGVIAAE, YMLIYIFMNLGTFACITLFGL, LSLVLCLLSLGGIPPLSGFFG, LYFLVPIALSTSVISMYYYLKII, and MIICVVASTLPGILINPIIAI.

This sequence belongs to the complex I subunit 2 family. NDH is composed of at least 16 different subunits, 5 of which are encoded in the nucleus.

It localises to the plastid. Its subcellular location is the chloroplast thylakoid membrane. The catalysed reaction is a plastoquinone + NADH + (n+1) H(+)(in) = a plastoquinol + NAD(+) + n H(+)(out). It carries out the reaction a plastoquinone + NADPH + (n+1) H(+)(in) = a plastoquinol + NADP(+) + n H(+)(out). Its function is as follows. NDH shuttles electrons from NAD(P)H:plastoquinone, via FMN and iron-sulfur (Fe-S) centers, to quinones in the photosynthetic chain and possibly in a chloroplast respiratory chain. The immediate electron acceptor for the enzyme in this species is believed to be plastoquinone. Couples the redox reaction to proton translocation, and thus conserves the redox energy in a proton gradient. This Angiopteris evecta (Mule's foot fern) protein is NAD(P)H-quinone oxidoreductase subunit 2 B, chloroplastic.